We begin with the raw amino-acid sequence, 424 residues long: Glutamate-1-semialdehyde 2,1-aminomutase (424 aa).

Lys-258 carries the post-translational modification N6-(pyridoxal phosphate)lysine.

It belongs to the class-III pyridoxal-phosphate-dependent aminotransferase family. HemL subfamily. Pyridoxal 5'-phosphate is required as a cofactor.

It is found in the cytoplasm. It catalyses the reaction (S)-4-amino-5-oxopentanoate = 5-aminolevulinate. It participates in porphyrin-containing compound metabolism; protoporphyrin-IX biosynthesis; 5-aminolevulinate from L-glutamyl-tRNA(Glu): step 2/2. In Pyrobaculum neutrophilum (strain DSM 2338 / JCM 9278 / NBRC 100436 / V24Sta) (Thermoproteus neutrophilus), this protein is Glutamate-1-semialdehyde 2,1-aminomutase.